A 244-amino-acid polypeptide reads, in one-letter code: Triosephosphate isomerase (244 aa).

9 to 11 (NWK) contributes to the substrate binding site. His93 (electrophile) is an active-site residue. Catalysis depends on Glu160, which acts as the Proton acceptor. Residues Gly166 and Ser206 each contribute to the substrate site.

Belongs to the triosephosphate isomerase family. Homodimer.

It localises to the cytoplasm. The enzyme catalyses D-glyceraldehyde 3-phosphate = dihydroxyacetone phosphate. The protein operates within carbohydrate biosynthesis; gluconeogenesis. It functions in the pathway carbohydrate degradation; glycolysis; D-glyceraldehyde 3-phosphate from glycerone phosphate: step 1/1. In terms of biological role, involved in the gluconeogenesis. Catalyzes stereospecifically the conversion of dihydroxyacetone phosphate (DHAP) to D-glyceraldehyde-3-phosphate (G3P). The sequence is that of Triosephosphate isomerase from Mycoplasma pneumoniae (strain ATCC 29342 / M129 / Subtype 1) (Mycoplasmoides pneumoniae).